A 76-amino-acid polypeptide reads, in one-letter code: Acyl carrier protein (76 aa).

Residues M1–Q76 form the Carrier domain. S36 carries the post-translational modification O-(pantetheine 4'-phosphoryl)serine.

Belongs to the acyl carrier protein (ACP) family. In terms of processing, 4'-phosphopantetheine is transferred from CoA to a specific serine of apo-ACP by AcpS. This modification is essential for activity because fatty acids are bound in thioester linkage to the sulfhydryl of the prosthetic group.

Its subcellular location is the cytoplasm. It participates in lipid metabolism; fatty acid biosynthesis. In terms of biological role, carrier of the growing fatty acid chain in fatty acid biosynthesis. The polypeptide is Acyl carrier protein (Deinococcus radiodurans (strain ATCC 13939 / DSM 20539 / JCM 16871 / CCUG 27074 / LMG 4051 / NBRC 15346 / NCIMB 9279 / VKM B-1422 / R1)).